The chain runs to 33 residues: Natriuretic peptide NP2 (33 aa).

Cysteines 10 and 26 form a disulfide.

In terms of tissue distribution, expressed by the venom gland.

The protein localises to the secreted. In terms of biological role, snake venom natriuretic peptide that shows an increase in perfusion pressure, urinary flow and glomerular filtration rate. Reduces total and proximal tubular transport of sodium. In the aortic ring assay, causes a relaxant effect in endothelium-intact thoracic aortic rings precontracted with phenylephrine in the presence and absence of isatin, a natriuretic receptor antagonist. In Crotalus durissus cascavella (Northeastern Brazilian rattlesnake), this protein is Natriuretic peptide NP2.